Consider the following 444-residue polypeptide: MFSKPLQTIYTVSRLNREIRALLEQGFASLVLTGEISNFITPASGHWYFSLKDDKAQIKAAMWRGNNRNQSYRPINGAQVTVKARVSLYEPRGDYQLIVEHMEPAGEGQFKQEFDALKMRLAAEGLFSSVYKKPLPQNINRIGVITSATGAAIKDILTVLKRRAPQLEVIIYPAMVQGKDAHLQLIKQIELANIRSEVDVLILGRGGGSLEDLWCFNHEQLARAIFNSQLPIVSAVGHEIDTTISDYVADVRAATPSAAAELVSPNTQELHNKVTQLVNRLANAFKHDMSEKRAQALQLQHRLNLCHPRNQLNQKAQRLDELSIALQQAMRNSLYQQERTLNNLTPRLMRQSPDKKLTQASHQLAQLQTRLNQAIQQQLQQANNSLALQASRLDSVSPLNVLARGYSITKTDKQKVVKSVADVKVGDTLITELVDGTLHSQVLS.

Belongs to the XseA family. As to quaternary structure, heterooligomer composed of large and small subunits.

The protein resides in the cytoplasm. It carries out the reaction Exonucleolytic cleavage in either 5'- to 3'- or 3'- to 5'-direction to yield nucleoside 5'-phosphates.. In terms of biological role, bidirectionally degrades single-stranded DNA into large acid-insoluble oligonucleotides, which are then degraded further into small acid-soluble oligonucleotides. The chain is Exodeoxyribonuclease 7 large subunit from Pseudoalteromonas translucida (strain TAC 125).